A 269-amino-acid polypeptide reads, in one-letter code: Glutamate racemase (269 aa).

Substrate-binding positions include 11-12 and 43-44; these read DS and YG. C74 acts as the Proton donor/acceptor in catalysis. Residue 75 to 76 coordinates substrate; the sequence is NT. The Proton donor/acceptor role is filled by C185. Position 186 to 187 (186 to 187) interacts with substrate; the sequence is TH.

The protein belongs to the aspartate/glutamate racemases family.

The catalysed reaction is L-glutamate = D-glutamate. It functions in the pathway cell wall biogenesis; peptidoglycan biosynthesis. Functionally, provides the (R)-glutamate required for cell wall biosynthesis. This chain is Glutamate racemase, found in Bacillus cereus (strain G9842).